We begin with the raw amino-acid sequence, 96 residues long: Co-chaperonin GroES (96 aa).

It belongs to the GroES chaperonin family. As to quaternary structure, heptamer of 7 subunits arranged in a ring. Interacts with the chaperonin GroEL.

It localises to the cytoplasm. In terms of biological role, together with the chaperonin GroEL, plays an essential role in assisting protein folding. The GroEL-GroES system forms a nano-cage that allows encapsulation of the non-native substrate proteins and provides a physical environment optimized to promote and accelerate protein folding. GroES binds to the apical surface of the GroEL ring, thereby capping the opening of the GroEL channel. This chain is Co-chaperonin GroES, found in Cupriavidus taiwanensis (strain DSM 17343 / BCRC 17206 / CCUG 44338 / CIP 107171 / LMG 19424 / R1) (Ralstonia taiwanensis (strain LMG 19424)).